Reading from the N-terminus, the 307-residue chain is L-lactate dehydrogenase (307 aa).

NAD(+) is bound by residues valine 13, aspartate 34, arginine 39, tyrosine 64, and 78 to 79 (GV). Position 87 (arginine 87) interacts with substrate. Serine 100 is an NAD(+) binding site. Residue 119–122 (NPVD) coordinates substrate. Threonine 142 provides a ligand contact to NAD(+). 147-150 (DSAR) is a binding site for substrate. Histidine 174 (proton acceptor) is an active-site residue. Threonine 224 contributes to the substrate binding site.

Belongs to the LDH/MDH superfamily. LDH family. In terms of assembly, homotetramer.

It localises to the cytoplasm. The catalysed reaction is (S)-lactate + NAD(+) = pyruvate + NADH + H(+). It participates in fermentation; pyruvate fermentation to lactate; (S)-lactate from pyruvate: step 1/1. In terms of biological role, catalyzes the conversion of lactate to pyruvate. The polypeptide is L-lactate dehydrogenase (Lactobacillus delbrueckii subsp. bulgaricus (strain ATCC BAA-365 / Lb-18)).